The primary structure comprises 609 residues: Replication protein E1 (609 aa).

The Nuclear localization signal signature appears at 81–83 (KRK). Phosphoserine; by host occurs at positions 87 and 94. Positions 93–102 (LSPRLQSITI) match the Nuclear export signal motif. The tract at residues 149–312 (QGVKGLGIVK…TMINHQTAQA (164 aa)) is DNA-binding region. An SF3 helicase domain is found at 411 to 561 (INFIRFLDIF…FPFDNNNMPQ (151 aa)). 437 to 444 (GPPDTGKS) is a binding site for ATP. Lysine 518 participates in a covalent cross-link: Glycyl lysine isopeptide (Lys-Gly) (interchain with G-Cter in SUMO). Residues 584–609 (DQEEEGDDGQSQRTFQCTAREPNGHL) form a disordered region.

This sequence belongs to the papillomaviridae E1 protein family. As to quaternary structure, can form hexamers. Interacts with E2 protein; this interaction increases E1 DNA binding specificity. Interacts with host DNA polymerase subunit POLA2. Interacts with host single stranded DNA-binding protein RPA1. Interacts with host TOP1; this interaction stimulates the enzymatic activity of TOP1. Post-translationally, phosphorylated. In terms of processing, sumoylated.

The protein resides in the host nucleus. It carries out the reaction Couples ATP hydrolysis with the unwinding of duplex DNA by translocating in the 3'-5' direction.. The catalysed reaction is ATP + H2O = ADP + phosphate + H(+). In terms of biological role, ATP-dependent DNA 3'-5' helicase required for initiation of viral DNA replication. It forms a complex with the viral E2 protein. The E1-E2 complex binds to the replication origin which contains binding sites for both proteins. During the initial step, a dimer of E1 interacts with a dimer of protein E2 leading to a complex that binds the viral origin of replication with high specificity. Then, a second dimer of E1 displaces the E2 dimer in an ATP-dependent manner to form the E1 tetramer. Following this, two E1 monomers are added to each half of the site, which results in the formation of two E1 trimers on the viral ori. Subsequently, two hexamers will be created. The double hexamer acts as a bi-directional helicase machinery and unwinds the viral DNA and then recruits the host DNA polymerase to start replication. The sequence is that of Replication protein E1 from Homo sapiens (Human).